Consider the following 141-residue polypeptide: Probable trafficking protein particle complex subunit 2 (141 aa).

The protein belongs to the TRAPP small subunits family. Sedlin subfamily. In terms of assembly, part of the multisubunit TRAPP (transport protein particle) complex.

It is found in the cytoplasm. Its subcellular location is the perinuclear region. It localises to the endoplasmic reticulum. The protein localises to the golgi apparatus. Its function is as follows. May play a role in vesicular transport from endoplasmic reticulum to Golgi. Required for the systemic spread of the RNAi response. The sequence is that of Probable trafficking protein particle complex subunit 2 (sedl-1) from Caenorhabditis elegans.